Here is a 393-residue protein sequence, read N- to C-terminus: METFLFTSESVNEGHPDKLCDQISDAVLDACLEQDPESKVACETCTKTNLVMVFGEITTKAIVDYEKIVRDTCRNIGFVSDDVGLDADNCKVLVYIEQQSPDIAQGVHGHLTKRPEEIGAGDQGHMFGYATDETPELMPLSHVLATKLGARLTEVRKNGTCPWLRPDGKTQVTVEYCNDNGAMIPIKVHTVLISTQHDETVTNDEIARDLKEHVIKPVIPEKYLDEKTIFHLNPSGRFVIGGPHGDAGLTGRKIIIDTYGGWGAHGGGAFSGKDPTKVDRSGAYIVRQAAKSIVASGLARRCIVQVSYAIGVPEPLSVFVDTYGTGKIPDKEILKIVKENFDFRPGMMSINLDLKRGGNGRFLKTAAYGHFGRDDPDFTWEVVKPLKWEKPQD.

E9 contacts Mg(2+). ATP is bound at residue H15. Residue E43 coordinates K(+). L-methionine contacts are provided by E56 and Q99. ATP contacts are provided by residues 167 to 169 (DGK), 235 to 238 (SGRF), D246, 252 to 253 (RK), A269, K273, and K277. D246 contributes to the L-methionine binding site. K277 provides a ligand contact to L-methionine.

The protein belongs to the AdoMet synthase family. In terms of assembly, homotetramer. Mn(2+) is required as a cofactor. Requires Mg(2+) as cofactor. The cofactor is Co(2+). It depends on K(+) as a cofactor.

It localises to the cytoplasm. The enzyme catalyses L-methionine + ATP + H2O = S-adenosyl-L-methionine + phosphate + diphosphate. The protein operates within amino-acid biosynthesis; S-adenosyl-L-methionine biosynthesis; S-adenosyl-L-methionine from L-methionine: step 1/1. Catalyzes the formation of S-adenosylmethionine from methionine and ATP. The reaction comprises two steps that are both catalyzed by the same enzyme: formation of S-adenosylmethionine (AdoMet) and triphosphate, and subsequent hydrolysis of the triphosphate. The chain is S-adenosylmethionine synthase 1 (METK1) from Solanum tuberosum (Potato).